The sequence spans 612 residues: BTB/POZ domain-containing protein 9 (612 aa).

Residues 36–104 (GDVTFVVEKK…IYTGRATLTD (69 aa)) form the BTB domain. One can recognise a BACK domain in the interval 142 to 240 (VCMTFDVASL…SLTELLNVVR (99 aa)). Positions 559 to 612 (QQSNQKEDSSEEPGTGDPSTPNQQLDPHAPRAPSASSLPPSPGPNSRSPNQQNQ) are disordered. The span at 589 to 612 (RAPSASSLPPSPGPNSRSPNQQNQ) shows a compositional bias: low complexity.

As to expression, expressed in the brain (at protein level).

In Mus musculus (Mouse), this protein is BTB/POZ domain-containing protein 9 (Btbd9).